The sequence spans 448 residues: Homogentisate 1,2-dioxygenase (448 aa).

Histidine 303 acts as the Proton acceptor in catalysis. Positions 346 and 352 each coordinate Fe cation. Tyrosine 361 and histidine 382 together coordinate homogentisate. Histidine 382 lines the Fe cation pocket.

It belongs to the homogentisate dioxygenase family. Hexamer; dimer of trimers. The cofactor is Fe cation.

It catalyses the reaction homogentisate + O2 = 4-maleylacetoacetate + H(+). It functions in the pathway amino-acid degradation; L-phenylalanine degradation; acetoacetate and fumarate from L-phenylalanine: step 4/6. Its function is as follows. Involved in the catabolism of homogentisate (2,5-dihydroxyphenylacetate or 2,5-OH-PhAc), a central intermediate in the degradation of phenylalanine and tyrosine. Catalyzes the oxidative ring cleavage of the aromatic ring of homogentisate to yield maleylacetoacetate. In Rhodopseudomonas palustris (strain BisA53), this protein is Homogentisate 1,2-dioxygenase.